The following is a 281-amino-acid chain: Nucleotide-binding protein Tpet_1006 (281 aa).

ATP is bound at residue 9 to 16; the sequence is GLSGAGKT. A GTP-binding site is contributed by 58–61; sequence DVRS.

The protein belongs to the RapZ-like family.

Its function is as follows. Displays ATPase and GTPase activities. The protein is Nucleotide-binding protein Tpet_1006 of Thermotoga petrophila (strain ATCC BAA-488 / DSM 13995 / JCM 10881 / RKU-1).